The sequence spans 249 residues: Coproheme decarboxylase (249 aa).

Fe-coproporphyrin III contacts are provided by residues R131, 145–149 (YPMDK), H172, Q185, and S223. Y145 is a catalytic residue.

The protein belongs to the ChdC family. Type 1 subfamily. Fe-coproporphyrin III is required as a cofactor.

The catalysed reaction is Fe-coproporphyrin III + 2 H2O2 + 2 H(+) = heme b + 2 CO2 + 4 H2O. It catalyses the reaction Fe-coproporphyrin III + H2O2 + H(+) = harderoheme III + CO2 + 2 H2O. It carries out the reaction harderoheme III + H2O2 + H(+) = heme b + CO2 + 2 H2O. It participates in porphyrin-containing compound metabolism; protoheme biosynthesis. Functionally, involved in coproporphyrin-dependent heme b biosynthesis. Catalyzes the decarboxylation of Fe-coproporphyrin III (coproheme) to heme b (protoheme IX), the last step of the pathway. The reaction occurs in a stepwise manner with a three-propionate intermediate. This chain is Coproheme decarboxylase, found in Shouchella clausii (strain KSM-K16) (Alkalihalobacillus clausii).